The primary structure comprises 332 residues: UDP-N-acetylenolpyruvoylglucosamine reductase (332 aa).

The FAD-binding PCMH-type domain maps to 55–221 (VGGAADLYVA…TQATLQLAPG (167 aa)). The active site involves R200. Catalysis depends on S251, which acts as the Proton donor. E321 is a catalytic residue.

It belongs to the MurB family. Requires FAD as cofactor.

It localises to the cytoplasm. The catalysed reaction is UDP-N-acetyl-alpha-D-muramate + NADP(+) = UDP-N-acetyl-3-O-(1-carboxyvinyl)-alpha-D-glucosamine + NADPH + H(+). It functions in the pathway cell wall biogenesis; peptidoglycan biosynthesis. In terms of biological role, cell wall formation. The sequence is that of UDP-N-acetylenolpyruvoylglucosamine reductase from Nostoc punctiforme (strain ATCC 29133 / PCC 73102).